The primary structure comprises 877 residues: DNA mismatch repair protein MutS (877 aa).

630–637 (GPNMAGKS) contributes to the ATP binding site.

Belongs to the DNA mismatch repair MutS family.

In terms of biological role, this protein is involved in the repair of mismatches in DNA. It is possible that it carries out the mismatch recognition step. This protein has a weak ATPase activity. In Jannaschia sp. (strain CCS1), this protein is DNA mismatch repair protein MutS.